The following is a 453-amino-acid chain: SH2 domain-containing protein 4A (453 aa).

Residues 96–127 adopt a coiled-coil conformation; that stretch reads EIIAEQARREAEKEAEQLRKKQEVELSQLSTL. The interval 280 to 301 is disordered; sequence AVKRPPIPPKPKLPPSANNSSI. Pro residues predominate over residues 284–293; sequence PPIPPKPKLP. The SH2 domain maps to 347–439; sequence WFHGIISRQE…LGRELLRFPC (93 aa).

It localises to the cytoplasm. Functionally, inhibits estrogen-induced cell proliferation. The polypeptide is SH2 domain-containing protein 4A (sh2d4a) (Xenopus tropicalis (Western clawed frog)).